Here is a 409-residue protein sequence, read N- to C-terminus: Peptidase T (409 aa).

His-78 is a binding site for Zn(2+). The active site involves Asp-80. Asp-140 provides a ligand contact to Zn(2+). Catalysis depends on Glu-173, which acts as the Proton acceptor. Zn(2+)-binding residues include Glu-174, Asp-196, and His-379.

The protein belongs to the peptidase M20B family. Zn(2+) is required as a cofactor.

The protein resides in the cytoplasm. It catalyses the reaction Release of the N-terminal residue from a tripeptide.. Its function is as follows. Cleaves the N-terminal amino acid of tripeptides. This Salmonella agona (strain SL483) protein is Peptidase T.